We begin with the raw amino-acid sequence, 289 residues long: MRQFEVNILGCGSALPATRHSLSSQIVNLNGELYMIDCGEGSQLQFRAMNLKFQRLNHIFISHLHGDHCFGLLGLVSMFVLLGRTVDLCIYSHPDTKCLFQPLIKYFFKELPFQVVFHPFDPTCSGLIFEDQVLRVFTIPLKHRVPTVGFLFEEKPIYLFDNNMQRGNFVTSGSQTVSSSCLSKLASFSCRYAYCSDTVYYEEIIPLITGVDLLYHEATYSNKDLARAKETYHSSAQQASLIARAANVKKLMLGHFSARYPDETFLLKEAQKIFPNTILASERMILPII.

Zn(2+)-binding residues include His-63, His-65, Asp-67, His-68, His-143, Asp-197, and His-255. Residue Asp-67 is the Proton acceptor of the active site.

It belongs to the RNase Z family. Homodimer. Zn(2+) serves as cofactor.

It carries out the reaction Endonucleolytic cleavage of RNA, removing extra 3' nucleotides from tRNA precursor, generating 3' termini of tRNAs. A 3'-hydroxy group is left at the tRNA terminus and a 5'-phosphoryl group is left at the trailer molecule.. Zinc phosphodiesterase, which displays some tRNA 3'-processing endonuclease activity. Probably involved in tRNA maturation, by removing a 3'-trailer from precursor tRNA. The polypeptide is Ribonuclease Z (Azobacteroides pseudotrichonymphae genomovar. CFP2).